Here is a 396-residue protein sequence, read N- to C-terminus: NADH-quinone oxidoreductase subunit D (396 aa).

The protein belongs to the complex I 49 kDa subunit family. NDH-1 is composed of 14 different subunits. Subunits NuoB, C, D, E, F, and G constitute the peripheral sector of the complex.

It localises to the cell inner membrane. The catalysed reaction is a quinone + NADH + 5 H(+)(in) = a quinol + NAD(+) + 4 H(+)(out). In terms of biological role, NDH-1 shuttles electrons from NADH, via FMN and iron-sulfur (Fe-S) centers, to quinones in the respiratory chain. The immediate electron acceptor for the enzyme in this species is believed to be ubiquinone. Couples the redox reaction to proton translocation (for every two electrons transferred, four hydrogen ions are translocated across the cytoplasmic membrane), and thus conserves the redox energy in a proton gradient. This chain is NADH-quinone oxidoreductase subunit D, found in Mesorhizobium japonicum (strain LMG 29417 / CECT 9101 / MAFF 303099) (Mesorhizobium loti (strain MAFF 303099)).